The primary structure comprises 509 residues: Cobyric acid synthase (509 aa).

The region spanning 262–459 is the GATase cobBQ-type domain; it reads ELKVGIIKLP…IHGIFENDDW (198 aa). Cys343 functions as the Nucleophile in the catalytic mechanism. The active site involves His451.

Belongs to the CobB/CobQ family. CobQ subfamily.

It participates in cofactor biosynthesis; adenosylcobalamin biosynthesis. Catalyzes amidations at positions B, D, E, and G on adenosylcobyrinic A,C-diamide. NH(2) groups are provided by glutamine, and one molecule of ATP is hydrogenolyzed for each amidation. The sequence is that of Cobyric acid synthase from Prochlorococcus marinus subsp. pastoris (strain CCMP1986 / NIES-2087 / MED4).